The following is a 302-amino-acid chain: MQAMLSSILDEVRPLIGLGKVADYIPALADVPANQLGIAVYGNDGSAYRAGDADTLFSVQSISKVFSLVQAIDHGGETIWERLGHEPSGQPFNSMVQLEFERGRPRNPFINAGALVICDINQSRFAVPILSMRDFVRRLSGNPHILVNSVVAESEAQHGARNAAMAYLMKSFGNFHNDVDAVLHSYFNYCALQMSCVDLAKAFSFLANEGTSAHSGEQILTARQTRQVNSIMATSGLYDEAGNFAYRVGLPGKSGVGGGIVAVVPGQFTVCVWSPELNAAGNSLAGMKALELLSERIGWSVF.

Substrate-binding residues include Ser61, Asn111, Glu155, Asn162, Tyr186, Tyr238, and Val256.

The protein belongs to the glutaminase family. In terms of assembly, homotetramer.

It carries out the reaction L-glutamine + H2O = L-glutamate + NH4(+). This is Glutaminase from Pseudomonas fluorescens (strain SBW25).